Reading from the N-terminus, the 178-residue chain is MKVAAATRNPNKLRAIREAYRTFGFPAEVVPVDKPPGAPPQPIGLDAVAKWALERARHALAAAPGADHGVGIEAGVVEVAGYHLDITIAAIVDREGYVTVGTSPAFQIPTALLHDVLQGRELGATAEAHYGRPAVGYREGIIGLLTRGVVKRIDLNYAAVLMALTPRLPHNAPHYRKA.

The protein belongs to the YjjX NTPase family. Homodimer. Requires Mg(2+) as cofactor. Mn(2+) is required as a cofactor.

The catalysed reaction is XTP + H2O = XDP + phosphate + H(+). It carries out the reaction ITP + H2O = IDP + phosphate + H(+). Phosphatase that hydrolyzes non-canonical purine nucleotides such as XTP and ITP to their respective diphosphate derivatives. Probably excludes non-canonical purines from DNA/RNA precursor pool, thus preventing their incorporation into DNA/RNA and avoiding chromosomal lesions. The protein is Probable inosine/xanthosine triphosphatase of Pyrobaculum calidifontis (strain DSM 21063 / JCM 11548 / VA1).